A 250-amino-acid chain; its full sequence is 23S rRNA (guanine(2535)-N(1))-methyltransferase (250 aa).

It carries out the reaction guanosine(2535) in 23S rRNA + S-adenosyl-L-methionine = N(1)-methylguanosine(2535) in 23S rRNA + S-adenosyl-L-homocysteine + H(+). Its function is as follows. Specifically methylates the guanine-2535 in 23S ribosomal RNA. Confers resistance to antibiotic avilamycin, an orthosomycin antibiotic. The polypeptide is 23S rRNA (guanine(2535)-N(1))-methyltransferase (aviRa) (Streptomyces viridochromogenes).